Here is a 128-residue protein sequence, read N- to C-terminus: Glycoprotein hormone alpha-2 (128 aa).

The N-terminal stretch at 1 to 20 (MPMAPRVLLLCLLGLAVTEG) is a signal peptide. Disulfide bonds link Cys30/Cys88, Cys47/Cys102, Cys56/Cys118, and Cys60/Cys120. 2 N-linked (GlcNAc...) asparagine glycosylation sites follow: Asn36 and Asn80.

This sequence belongs to the glycoprotein hormones subunit alpha family. Heterodimer with GPHB5; this heterodimer interacts with thyroid-stimulating hormone receptor (TSHR), and hence stimulates cAMP production.

The protein localises to the secreted. Functions as a heterodimeric glycoprotein hormone with GPHB5 able to bind and activate the thyroid-stimulating hormone receptor (TSHR), leading to increased cAMP production. Plays a central role in controlling thyroid cell metabolism. This is Glycoprotein hormone alpha-2 (Gpha2) from Mus musculus (Mouse).